A 319-amino-acid chain; its full sequence is HPr kinase/phosphorylase (319 aa).

Catalysis depends on residues His-141 and Lys-162. 156 to 163 (GNSGVGKS) lines the ATP pocket. Mg(2+) is bound at residue Ser-163. Residue Asp-180 is the Proton acceptor; for phosphorylation activity. Proton donor; for dephosphorylation activity of the active site. The important for the catalytic mechanism of both phosphorylation and dephosphorylation stretch occupies residues 204-213 (MEIRGIGIID). Residue Glu-205 coordinates Mg(2+). The active site involves Arg-246. The important for the catalytic mechanism of dephosphorylation stretch occupies residues 267 to 272 (PVKVGR).

Belongs to the HPrK/P family. Homohexamer. The cofactor is Mg(2+).

The catalysed reaction is [HPr protein]-L-serine + ATP = [HPr protein]-O-phospho-L-serine + ADP + H(+). It carries out the reaction [HPr protein]-O-phospho-L-serine + phosphate + H(+) = [HPr protein]-L-serine + diphosphate. Functionally, catalyzes the ATP- as well as the pyrophosphate-dependent phosphorylation of a specific serine residue in HPr, a phosphocarrier protein of the phosphoenolpyruvate-dependent sugar phosphotransferase system (PTS). HprK/P also catalyzes the pyrophosphate-producing, inorganic phosphate-dependent dephosphorylation (phosphorolysis) of seryl-phosphorylated HPr (P-Ser-HPr). The two antagonistic activities of HprK/P are regulated by several intracellular metabolites, which change their concentration in response to the absence or presence of rapidly metabolisable carbon sources (glucose, fructose, etc.) in the growth medium. Therefore, by controlling the phosphorylation state of HPr, HPrK/P is a sensor enzyme that plays a major role in the regulation of carbon metabolism and sugar transport: it mediates carbon catabolite repression (CCR), and regulates PTS-catalyzed carbohydrate uptake and inducer exclusion. The polypeptide is HPr kinase/phosphorylase (Lactobacillus gasseri (strain ATCC 33323 / DSM 20243 / BCRC 14619 / CIP 102991 / JCM 1131 / KCTC 3163 / NCIMB 11718 / NCTC 13722 / AM63)).